We begin with the raw amino-acid sequence, 485 residues long: Anthranilate synthase component I-like protein (485 aa).

Residues S69 and 271–273 (PFA) each bind L-tryptophan. 306 to 307 (GT) is a binding site for chorismate. Position 333 (E333) interacts with Mg(2+). Residues R441, 455–457 (GAG), and G457 each bind chorismate. E470 contributes to the Mg(2+) binding site.

The protein belongs to the anthranilate synthase component I family. As to quaternary structure, tetramer of two components I and two components II. Requires Mg(2+) as cofactor.

The enzyme catalyses chorismate + L-glutamine = anthranilate + pyruvate + L-glutamate + H(+). It participates in amino-acid biosynthesis; L-tryptophan biosynthesis; L-tryptophan from chorismate: step 1/5. The sequence is that of Anthranilate synthase component I-like protein (trpE2) from Synechocystis sp. (strain ATCC 27184 / PCC 6803 / Kazusa).